A 399-amino-acid chain; its full sequence is S-adenosylmethionine synthase (399 aa).

H17 lines the ATP pocket. D19 serves as a coordination point for Mg(2+). Residue E45 coordinates K(+). L-methionine is bound by residues E58 and Q101. The interval 101–111 is flexible loop; that stretch reads QSADIAMGVDQ. ATP-binding positions include 177 to 179, 244 to 245, D253, 259 to 260, A276, and K280; these read DGK, RF, and RK. D253 is an L-methionine binding site. K284 contacts L-methionine.

It belongs to the AdoMet synthase family. As to quaternary structure, homotetramer; dimer of dimers. It depends on Mg(2+) as a cofactor. The cofactor is K(+).

The protein resides in the cytoplasm. The catalysed reaction is L-methionine + ATP + H2O = S-adenosyl-L-methionine + phosphate + diphosphate. It functions in the pathway amino-acid biosynthesis; S-adenosyl-L-methionine biosynthesis; S-adenosyl-L-methionine from L-methionine: step 1/1. Functionally, catalyzes the formation of S-adenosylmethionine (AdoMet) from methionine and ATP. The overall synthetic reaction is composed of two sequential steps, AdoMet formation and the subsequent tripolyphosphate hydrolysis which occurs prior to release of AdoMet from the enzyme. The protein is S-adenosylmethionine synthase of Bacillus mycoides (strain KBAB4) (Bacillus weihenstephanensis).